The chain runs to 341 residues: Probable electron transfer flavoprotein subunit alpha, mitochondrial (341 aa).

An FAD-binding site is contributed by 285 to 313 (LYIAVGIDGAIQHLAGIKDSKVIAAINRD).

Belongs to the ETF alpha-subunit/FixB family. In terms of assembly, heterodimer of an alpha and a beta subunit. FAD is required as a cofactor.

It is found in the mitochondrion matrix. Its function is as follows. The electron transfer flavoprotein serves as a specific electron acceptor for several dehydrogenases, including five acyl-CoA dehydrogenases, glutaryl-CoA and sarcosine dehydrogenase. It transfers the electrons to the main mitochondrial respiratory chain via ETF-ubiquinone oxidoreductase (ETF dehydrogenase). This Schizosaccharomyces pombe (strain 972 / ATCC 24843) (Fission yeast) protein is Probable electron transfer flavoprotein subunit alpha, mitochondrial.